The sequence spans 1073 residues: Duffy receptor alpha form (1073 aa).

An N-terminal signal peptide occupies residues M1–A21. The Extracellular segment spans residues N22–T1007. Residues N134, N179, and N202 are each glycosylated (N-linked (GlcNAc...) asparagine). Cystine bridges form between C214/C243 and C227/C234. 2 N-linked (GlcNAc...) asparagine glycosylation sites follow: N252 and N348. 4 disulfide bridges follow: C297/C374, C412/C429, C424/C504, and C433/C502. The tract at residues V517–Q915 is disordered. The span at A528–G543 shows a compositional bias: polar residues. Residues K546 to G561 show a composition bias toward basic and acidic residues. The segment covering K562 to A576 has biased composition (polar residues). Composition is skewed to basic and acidic residues over residues G675 to S710 and H717 to E734. The N-linked (GlcNAc...) asparagine glycan is linked to N679. The segment covering A736–G766 has biased composition (polar residues). N746, N779, and N788 each carry an N-linked (GlcNAc...) asparagine glycan. Positions G799 to M810 are enriched in basic and acidic residues. Composition is skewed to low complexity over residues S821–H843 and S851–T864. The span at T867–F891 shows a compositional bias: basic and acidic residues. Positions R893–R909 are enriched in polar residues. The chain crosses the membrane as a helical span at residues G1008 to N1029. Topologically, residues A1030 to S1073 are cytoplasmic.

In terms of assembly, interacts (via region II) with human ACKR1 (via N-terminal extracellular domain). Interacts (via region II) with rhesus macaque ACKR1 (via N-terminal extracellular domain).

It localises to the cell membrane. The protein localises to the cytoplasmic vesicle. Its subcellular location is the secretory vesicle. It is found in the microneme. Functionally, binds to the human erythrocyte Duffy blood group determinant (ACKR1). Binds to the rhesus macaque erythrocyte Duffy blood group determinant (ACKR1). This chain is Duffy receptor alpha form, found in Plasmodium knowlesi.